Reading from the N-terminus, the 512-residue chain is 2,3-bisphosphoglycerate-independent phosphoglycerate mutase (512 aa).

Mn(2+) is bound by residues aspartate 13 and serine 63. Serine 63 serves as the catalytic Phosphoserine intermediate. Residues histidine 124, 154–155 (RD), arginine 186, arginine 192, 262–265 (RPDR), and lysine 337 each bind substrate. 5 residues coordinate Mn(2+): aspartate 404, histidine 408, aspartate 445, histidine 446, and histidine 463.

Belongs to the BPG-independent phosphoglycerate mutase family. In terms of assembly, monomer. Mn(2+) is required as a cofactor.

It catalyses the reaction (2R)-2-phosphoglycerate = (2R)-3-phosphoglycerate. Its pathway is carbohydrate degradation; glycolysis; pyruvate from D-glyceraldehyde 3-phosphate: step 3/5. Its function is as follows. Essential for rapid growth and for sporulation. Catalyzes the interconversion of 2-phosphoglycerate and 3-phosphoglycerate. The chain is 2,3-bisphosphoglycerate-independent phosphoglycerate mutase from Oceanobacillus iheyensis (strain DSM 14371 / CIP 107618 / JCM 11309 / KCTC 3954 / HTE831).